The following is a 133-amino-acid chain: Helix-loop-helix protein 1 (133 aa).

A disordered region spans residues 1 to 78; that stretch reads MMLNSDTMEL…RRRATAKYRT (78 aa). The span at 25–39 shows a compositional bias: gly residues; the sequence is DCGGGPGPDGAGSGD. Over residues 52 to 65 the composition is skewed to basic and acidic residues; sequence ESGRKDLQHLSREE. Residues 66 to 78 show a composition bias toward basic residues; it reads RRRRRRATAKYRT. The bHLH domain maps to 75-127; that stretch reads KYRTAHATRERIRVEAFNLAFAELRKLLPTLPPDKKLSKIEILRLAICYISYL.

As to quaternary structure, efficient DNA binding requires dimerization with another bHLH protein.

The protein localises to the nucleus. Its function is as follows. May serve as DNA-binding protein and may be involved in the control of cell-type determination, possibly within the developing nervous system. The chain is Helix-loop-helix protein 1 (Nhlh1) from Mus musculus (Mouse).